The chain runs to 415 residues: Serine hydroxymethyltransferase (415 aa).

(6S)-5,6,7,8-tetrahydrofolate contacts are provided by residues L122 and 126–128 (GHL). K230 carries the post-translational modification N6-(pyridoxal phosphate)lysine.

It belongs to the SHMT family. As to quaternary structure, homodimer. It depends on pyridoxal 5'-phosphate as a cofactor.

It is found in the cytoplasm. It catalyses the reaction (6R)-5,10-methylene-5,6,7,8-tetrahydrofolate + glycine + H2O = (6S)-5,6,7,8-tetrahydrofolate + L-serine. Its pathway is one-carbon metabolism; tetrahydrofolate interconversion. The protein operates within amino-acid biosynthesis; glycine biosynthesis; glycine from L-serine: step 1/1. Functionally, catalyzes the reversible interconversion of serine and glycine with tetrahydrofolate (THF) serving as the one-carbon carrier. This reaction serves as the major source of one-carbon groups required for the biosynthesis of purines, thymidylate, methionine, and other important biomolecules. Also exhibits THF-independent aldolase activity toward beta-hydroxyamino acids, producing glycine and aldehydes, via a retro-aldol mechanism. The polypeptide is Serine hydroxymethyltransferase (Ralstonia pickettii (strain 12J)).